A 264-amino-acid chain; its full sequence is ATP synthase subunit b 1 (264 aa).

The helical transmembrane segment at 2 to 22 (LFDWFTFWAQLLNFLILVWLL) threads the bilayer. A disordered region spans residues 240–264 (ASSALLDGPDDEMNEEEGHAGKDAD). Over residues 255–264 (EEGHAGKDAD) the composition is skewed to basic and acidic residues.

It belongs to the ATPase B chain family. F-type ATPases have 2 components, F(1) - the catalytic core - and F(0) - the membrane proton channel. F(1) has five subunits: alpha(3), beta(3), gamma(1), delta(1), epsilon(1). F(0) has four main subunits: a(1), b(2) and c(10-14). The alpha and beta chains form an alternating ring which encloses part of the gamma chain. F(1) is attached to F(0) by a central stalk formed by the gamma and epsilon chains, while a peripheral stalk is formed by the delta and b chains.

It localises to the cell inner membrane. Its function is as follows. F(1)F(0) ATP synthase produces ATP from ADP in the presence of a proton or sodium gradient. F-type ATPases consist of two structural domains, F(1) containing the extramembraneous catalytic core and F(0) containing the membrane proton channel, linked together by a central stalk and a peripheral stalk. During catalysis, ATP synthesis in the catalytic domain of F(1) is coupled via a rotary mechanism of the central stalk subunits to proton translocation. Component of the F(0) channel, it forms part of the peripheral stalk, linking F(1) to F(0). This chain is ATP synthase subunit b 1, found in Chlorobium luteolum (strain DSM 273 / BCRC 81028 / 2530) (Pelodictyon luteolum).